The chain runs to 136 residues: Large ribosomal subunit protein bL17 (136 aa).

The protein belongs to the bacterial ribosomal protein bL17 family. Part of the 50S ribosomal subunit. Contacts protein L32.

This Rickettsia africae (strain ESF-5) protein is Large ribosomal subunit protein bL17.